Consider the following 180-residue polypeptide: NAD(P)H-quinone oxidoreductase subunit I, chloroplastic (180 aa).

2 consecutive 4Fe-4S ferredoxin-type domains span residues 55 to 84 (GRIH…VDWR) and 95 to 124 (LNYS…MTEE). Residues cysteine 64, cysteine 67, cysteine 70, cysteine 74, cysteine 104, cysteine 107, cysteine 110, and cysteine 114 each coordinate [4Fe-4S] cluster.

The protein belongs to the complex I 23 kDa subunit family. NDH is composed of at least 16 different subunits, 5 of which are encoded in the nucleus. [4Fe-4S] cluster is required as a cofactor.

It is found in the plastid. The protein localises to the chloroplast thylakoid membrane. The enzyme catalyses a plastoquinone + NADH + (n+1) H(+)(in) = a plastoquinol + NAD(+) + n H(+)(out). It catalyses the reaction a plastoquinone + NADPH + (n+1) H(+)(in) = a plastoquinol + NADP(+) + n H(+)(out). Functionally, NDH shuttles electrons from NAD(P)H:plastoquinone, via FMN and iron-sulfur (Fe-S) centers, to quinones in the photosynthetic chain and possibly in a chloroplast respiratory chain. The immediate electron acceptor for the enzyme in this species is believed to be plastoquinone. Couples the redox reaction to proton translocation, and thus conserves the redox energy in a proton gradient. The protein is NAD(P)H-quinone oxidoreductase subunit I, chloroplastic of Chloranthus spicatus (Chulantree).